We begin with the raw amino-acid sequence, 535 residues long: ABC1 family protein C10F6.14c (535 aa).

This sequence belongs to the protein kinase superfamily. ADCK protein kinase family.

In Schizosaccharomyces pombe (strain 972 / ATCC 24843) (Fission yeast), this protein is ABC1 family protein C10F6.14c.